Reading from the N-terminus, the 456-residue chain is Phospholipase A1 member A (456 aa).

Residues 1–25 (MRPGLWETCFWLWGPLLWLSIGSSG) form the signal peptide. The Nucleophile role is filled by serine 166. Aspartate 190 acts as the Charge relay system in catalysis. Cysteine 245 and cysteine 258 are joined by a disulfide. Histidine 260 serves as the catalytic Charge relay system. Intrachain disulfides connect cysteine 282/cysteine 293 and cysteine 296/cysteine 304. N-linked (GlcNAc...) asparagine glycosylation occurs at asparagine 365.

It belongs to the AB hydrolase superfamily. Lipase family.

The protein localises to the secreted. The enzyme catalyses a 1,2-diacyl-sn-glycero-3-phospho-L-serine + H2O = a 2-acyl-sn-glycero-3-phospho-L-serine + a fatty acid + H(+). It carries out the reaction 1,2-di-(9Z)-octadecenoyl-sn-glycero-3-phospho-L-serine + H2O = 2-(9Z-octadecenoyl)-sn-glycero-3-phospho-L-serine + (9Z)-octadecenoate + H(+). The catalysed reaction is 1-hexadecanoyl-2-(5Z,8Z,11Z,14Z-eicosatetraenoyl)-sn-glycero-3-phospho-L-serine + H2O = 2-(5Z,8Z,11Z,14Z)-eicosatetraenoyl-sn-glycero-3-phospho-L-serine + hexadecanoate + H(+). It catalyses the reaction a 1-acyl-sn-glycero-3-phospho-L-serine + H2O = sn-glycero-3-phospho-L-serine + a fatty acid + H(+). The enzyme catalyses 1-(9Z-octadecenoyl)-sn-glycero-3-phospho-L-serine + H2O = sn-glycero-3-phospho-L-serine + (9Z)-octadecenoate + H(+). In terms of biological role, hydrolyzes the ester bond of the acyl group attached at the sn-1 position of phosphatidylserines (phospholipase A1 activity) and 1-acyl-2-lysophosphatidylserines (lysophospholipase activity) in the pathway of phosphatidylserines acyl chain remodeling. Cleaves phosphatidylserines exposed on the outer leaflet of the plasma membrane of apoptotic cells producing 2-acyl-1-lysophosphatidylserines, which in turn enhance mast cell activation and histamine production. Has no activity toward other glycerophospholipids including phosphatidylcholines, phosphatidylethanolamines, phosphatidic acids or phosphatidylinositols, or glycerolipids such as triolein. This Mus musculus (Mouse) protein is Phospholipase A1 member A.